The sequence spans 101 residues: Small ribosomal subunit protein uS14 (101 aa).

Belongs to the universal ribosomal protein uS14 family. In terms of assembly, part of the 30S ribosomal subunit. Contacts proteins S3 and S10.

In terms of biological role, binds 16S rRNA, required for the assembly of 30S particles and may also be responsible for determining the conformation of the 16S rRNA at the A site. This Pseudoalteromonas atlantica (strain T6c / ATCC BAA-1087) protein is Small ribosomal subunit protein uS14.